We begin with the raw amino-acid sequence, 153 residues long: Transcriptional repressor NrdR (153 aa).

A zinc finger spans residues 3–34; it reads CPYCGYEDSKVIDTRPADEGRTIKRRRECLKC. The region spanning 49-139 is the ATP-cone domain; it reads ILVIKKDNRR…VYRQFKDINT (91 aa).

This sequence belongs to the NrdR family. Requires Zn(2+) as cofactor.

Functionally, negatively regulates transcription of bacterial ribonucleotide reductase nrd genes and operons by binding to NrdR-boxes. This Caldicellulosiruptor saccharolyticus (strain ATCC 43494 / DSM 8903 / Tp8T 6331) protein is Transcriptional repressor NrdR.